A 495-amino-acid polypeptide reads, in one-letter code: UDP-N-acetylmuramate--L-alanine ligase (495 aa).

120–126 (GSHGKTT) contributes to the ATP binding site.

It belongs to the MurCDEF family.

It localises to the cytoplasm. The catalysed reaction is UDP-N-acetyl-alpha-D-muramate + L-alanine + ATP = UDP-N-acetyl-alpha-D-muramoyl-L-alanine + ADP + phosphate + H(+). It functions in the pathway cell wall biogenesis; peptidoglycan biosynthesis. Functionally, cell wall formation. The sequence is that of UDP-N-acetylmuramate--L-alanine ligase from Rickettsia prowazekii (strain Madrid E).